Consider the following 500-residue polypeptide: Probable cytosol aminopeptidase (500 aa).

Lys264 and Asp269 together coordinate Mn(2+). The active site involves Lys276. Asp287, Asp346, and Glu348 together coordinate Mn(2+). The active site involves Arg350.

It belongs to the peptidase M17 family. Mn(2+) is required as a cofactor.

Its subcellular location is the cytoplasm. The enzyme catalyses Release of an N-terminal amino acid, Xaa-|-Yaa-, in which Xaa is preferably Leu, but may be other amino acids including Pro although not Arg or Lys, and Yaa may be Pro. Amino acid amides and methyl esters are also readily hydrolyzed, but rates on arylamides are exceedingly low.. It catalyses the reaction Release of an N-terminal amino acid, preferentially leucine, but not glutamic or aspartic acids.. Its function is as follows. Presumably involved in the processing and regular turnover of intracellular proteins. Catalyzes the removal of unsubstituted N-terminal amino acids from various peptides. This Rhodopseudomonas palustris (strain ATCC BAA-98 / CGA009) protein is Probable cytosol aminopeptidase.